Here is a 162-residue protein sequence, read N- to C-terminus: Heat shock protein beta-6 (162 aa).

Residues 1–72 (MEIRVPVQPS…PTAQVPTDPG (72 aa)) are involved in stabilization of the HSPB1:HSBP6 heterodimer. Position 16 is a phosphoserine (S16). Q31 is covalently cross-linked (Isoglutamyl lysine isopeptide (Gln-Lys) (interchain with K-162)). A sHSP domain is found at 56-162 (RAPSVALPTA…ASLPSPPAAK (107 aa)). At Q66 the chain carries Deamidated glutamine. The residue at position 157 (S157) is a Phosphoserine. Residue K162 forms an Isoglutamyl lysine isopeptide (Lys-Gln) (interchain with Q-31) linkage.

Belongs to the small heat shock protein (HSP20) family. Homodimer. Small heat shock proteins form high molecular mass oligomers containing variable number of monomers; these oligomers display a very flexible quaternary structure easily exchanging their subunits. Heterooligomer with HSPB1; formed through oligomerization of HSPB1:HSBP6 dimers; subunit exchange leads to formation of at least two different heterooligomeric complexes, differing in variable quantities of HSPB1 and HSPB6 homodimers in addition to HSPB1:HSPB6 heterodimers. Heterooligomer with CRYAB; large heterooligomers consist of CRYAB homodimers and HSPB5:HSPB6 heterodimers but lacking HSPB6 homodimers. Interacts with BAG3. Interacts (phosphorylated) with YWHAZ. Interacts with PDE4A and PDE4D; required for maintenance of the non-phosphorylated state of HSPB6 under basal conditions. Interacts with KDR. Interacts with PRKD1. The N-terminus is blocked. Post-translationally, phosphorylated at Ser-16 by PKA and probably PKD1K; required to protect cardiomyocytes from apoptosis. In terms of tissue distribution, widely expressed. High expression in muscle tissues.

The protein resides in the cytoplasm. Its subcellular location is the nucleus. It is found in the secreted. In terms of biological role, small heat shock protein which functions as a molecular chaperone probably maintaining denatured proteins in a folding-competent state. Seems to have versatile functions in various biological processes. Plays a role in regulating muscle function such as smooth muscle vasorelaxation and cardiac myocyte contractility. May regulate myocardial angiogenesis implicating KDR. Overexpression mediates cardioprotection and angiogenesis after induced damage. Stabilizes monomeric YWHAZ thereby supporting YWHAZ chaperone-like activity. The protein is Heat shock protein beta-6 (Hspb6) of Rattus norvegicus (Rat).